An 897-amino-acid chain; its full sequence is Putative POM121-like protein 1-like (897 aa).

The span at 1–19 (MPEQDKDPRVQENPDDQRT) shows a compositional bias: basic and acidic residues. Disordered regions lie at residues 1–177 (MPEQ…LPPP), 211–252 (IPDC…PKSQ), 266–302 (EVPS…RDTA), 315–348 (ASRD…GSLL), 362–469 (ATAA…ASRP), 484–522 (DCRP…RPKS), 536–612 (AEVP…LPPS), 642–741 (AQRS…ASRP), 753–793 (AISD…DRPK), and 812–856 (STAP…APFT). The span at 54-65 (LHAQSSEIRYNH) shows a compositional bias: polar residues. The segment covering 66-76 (TSQTSWTSSST) has biased composition (low complexity). 3 stretches are compositionally biased toward polar residues: residues 77–89 (KRNA…SSTG), 103–114 (SRCQLTLSYSKT), and 219–228 (PSHTLSSLAT). Polar residues-rich tracts occupy residues 376 to 385 (NQRSQTSRTR), 417 to 430 (SHCQ…NTVS), 490 to 499 (PSHTLSSLAT), and 556 to 579 (FSSS…TSLI). Residues 599–612 (TSAPAAAAAALPPS) are compositionally biased toward low complexity. Polar residues-rich tracts occupy residues 650–676 (NQRS…STEG), 689–702 (SHCQ…NTVS), 762–771 (PSHTLSSLAT), and 828–849 (FSSS…QDTS). A helical transmembrane segment spans residues 877-897 (LGLFLLVFSFFFLLTWASFSF).

It belongs to the POM121 family.

It localises to the membrane. In Homo sapiens (Human), this protein is Putative POM121-like protein 1-like.